We begin with the raw amino-acid sequence, 701 residues long: Putative pentatricopeptide repeat-containing protein At3g25970 (701 aa).

PPR repeat units lie at residues 34 to 64 (DIYV…MPKR), 65 to 99 (DSVS…GSDV), 100 to 134 (DGYS…GYEC), 135 to 165 (NVYV…ISEP), 166 to 200 (NSVS…AAVT), 202 to 236 (DAGT…GLQH), 237 to 267 (EITI…LGGS), 269 to 303 (DLIS…WVET), 304 to 338 (DIYT…GLEQ), 339 to 371 (VTSA…LKSK), 372 to 406 (DLIS…EIKV), 407 to 441 (DDYA…GFVS), 442 to 472 (NEFV…ISSK), 474 to 508 (STVA…NVKL), 509 to 539 (DHVT…MEPV), and 545 to 575 (RMEH…MPLN). The type E motif stretch occupies residues 580 to 655 (VLKTFLGVCR…VPGWSWIEIR (76 aa)). A type E(+) motif region spans residues 656 to 686 (NQVKAFNAEDRSNPLCQDIYMMIKDLTQEMQ).

Belongs to the PPR family. PCMP-E subfamily.

The protein is Putative pentatricopeptide repeat-containing protein At3g25970 (PCMP-E46) of Arabidopsis thaliana (Mouse-ear cress).